The chain runs to 592 residues: V-type ATP synthase alpha chain (592 aa).

232 to 239 (GPFGAGKT) is a binding site for ATP.

The protein belongs to the ATPase alpha/beta chains family.

The catalysed reaction is ATP + H2O + 4 H(+)(in) = ADP + phosphate + 5 H(+)(out). Functionally, produces ATP from ADP in the presence of a proton gradient across the membrane. The V-type alpha chain is a catalytic subunit. The polypeptide is V-type ATP synthase alpha chain (Clostridium botulinum (strain Eklund 17B / Type B)).